A 119-amino-acid chain; its full sequence is Hisactophilin-3 (119 aa).

Gly2 carries N-myristoyl glycine lipidation. Positions 8–110 are contains several HHXH repeats; that stretch reads SHHGHFLSAE…SIYTTHHHHH (103 aa). 2 tandem repeats follow at residues 34-47 and 75-87. The 2 X 13 AA approximate repeats stretch occupies residues 34–87; sequence FHVENHGHHKVAIRTHANKYVSINDNNDVYISHHFHGEHSLFHLEHHGGKVSIK.

Belongs to the hisactophilin family. Phosphorylated.

It is found in the cytoplasm. The protein localises to the cell membrane. May act as an intracellular pH sensor that links chemotactic signals to responses in the microfilament system of the cells by nucleating actin polymerization or stabilizing the filaments. This Dictyostelium discoideum (Social amoeba) protein is Hisactophilin-3 (hatC).